We begin with the raw amino-acid sequence, 316 residues long: Myb-related protein 306 (316 aa).

HTH myb-type domains are found at residues 9–65 and 66–116; these read KIGV…RPGI and KRGD…KKKL. DNA-binding regions (H-T-H motif) lie at residues 37-61 and 89-112; these read WRAIPSNTGLLRCSKSCRLRWTNYL and WAAIASYLPHRTDNDIKNYWNTHL. Disordered regions lie at residues 119-144, 168-193, and 209-230; these read LQSPENGKCQDGNSSVDSDKSVSKGQ, KTSSSTDDPKLSTVQTTQPRPFQAST, and KKSPVNASSTSQAGSSESTTTS. A compositionally biased stretch (basic and acidic residues) spans 135-144; sequence DSDKSVSKGQ. The span at 181 to 193 shows a compositional bias: polar residues; it reads VQTTQPRPFQAST. The span at 216–230 shows a compositional bias: low complexity; it reads SSTSQAGSSESTTTS.

As to expression, expressed in flowers, leaves and weakly in seed pods.

It is found in the nucleus. In terms of biological role, transcription factor. The protein is Myb-related protein 306 of Antirrhinum majus (Garden snapdragon).